The following is an 826-amino-acid chain: Zinc phosphodiesterase ELAC protein 2 (826 aa).

A mitochondrion-targeting transit peptide spans 1-16 (MWALCSLLRSAAGRTM). 2 disordered regions span residues 16 to 51 (MSQG…PSGC) and 188 to 231 (EQRR…VSQR). Residues 27 to 38 (ARRERPRKDPLR) show a composition bias toward basic and acidic residues. 6 positions are modified to phosphoserine: serine 199, serine 208, serine 212, serine 229, serine 618, and serine 736. Basic and acidic residues predominate over residues 208-224 (SPERSSDSESNENEPHL). Residues 798–826 (ELAGGLEDGEPQQKRAHTEEPQAKKVRAQ) form a disordered region. Positions 808–820 (PQQKRAHTEEPQA) are enriched in basic and acidic residues.

This sequence belongs to the RNase Z family. As to quaternary structure, homodimer. Interacts with PTCD1. The cofactor is Zn(2+). As to expression, widely expressed. Highly expressed in heart, placenta, liver, skeletal muscle, kidney, pancreas, testis and ovary. Weakly expressed in brain, lung, spleen, thymus, prostate, small intestine, colon and leukocytes.

It is found in the mitochondrion. The protein localises to the mitochondrion matrix. The protein resides in the mitochondrion nucleoid. Its subcellular location is the nucleus. The catalysed reaction is Endonucleolytic cleavage of RNA, removing extra 3' nucleotides from tRNA precursor, generating 3' termini of tRNAs. A 3'-hydroxy group is left at the tRNA terminus and a 5'-phosphoryl group is left at the trailer molecule.. Its function is as follows. Zinc phosphodiesterase, which displays mitochondrial tRNA 3'-processing endonuclease activity. Involved in tRNA maturation, by removing a 3'-trailer from precursor tRNA. Associates with mitochondrial DNA complexes at the nucleoids to initiate RNA processing and ribosome assembly. This Homo sapiens (Human) protein is Zinc phosphodiesterase ELAC protein 2 (ELAC2).